The following is a 681-amino-acid chain: Macrolide export ATP-binding/permease protein MacB (681 aa).

The 239-residue stretch at 6 to 244 (LKLAAVTRRF…FAEVGVGAAA (239 aa)) folds into the ABC transporter domain. Position 42–49 (42–49 (GASGSGKS)) interacts with ATP. Residues 246–274 (TETAADTRSAPASGDAPPPANNDTAADPA) form a disordered region. 4 helical membrane passes run 306-326 (LLTM…VAVG), 554-574 (LTLL…IGVM), 611-631 (LVCL…GALF), and 644-664 (AGAI…FGFM).

Belongs to the ABC transporter superfamily. Macrolide exporter (TC 3.A.1.122) family. As to quaternary structure, homodimer.

The protein resides in the cell inner membrane. Its function is as follows. Non-canonical ABC transporter that contains transmembrane domains (TMD), which form a pore in the inner membrane, and an ATP-binding domain (NBD), which is responsible for energy generation. Confers resistance against macrolides. The polypeptide is Macrolide export ATP-binding/permease protein MacB (Burkholderia cenocepacia (strain HI2424)).